The following is a 516-amino-acid chain: L-amino-acid oxidase (516 aa).

The first 18 residues, M1–C18, serve as a signal peptide directing secretion. C28 and C189 form a disulfide bridge. Residues M61–A62, E81–A82, R89, and G103–R106 contribute to the FAD site. 2 residues coordinate substrate: R106 and H239. V279 lines the FAD pocket. The cysteines at positions 349 and 430 are disulfide-linked. N379 carries N-linked (GlcNAc...) asparagine glycosylation. Y390 is a substrate binding site. FAD contacts are provided by residues E475 and G482–T487. Residue G482–W483 participates in substrate binding.

Belongs to the flavin monoamine oxidase family. FIG1 subfamily. Homodimer; non-covalently linked. FAD serves as cofactor. In terms of processing, N-glycosylated. Expressed by the venom gland.

The protein resides in the secreted. The catalysed reaction is an L-alpha-amino acid + O2 + H2O = a 2-oxocarboxylate + H2O2 + NH4(+). It carries out the reaction L-leucine + O2 + H2O = 4-methyl-2-oxopentanoate + H2O2 + NH4(+). The enzyme catalyses L-phenylalanine + O2 + H2O = 3-phenylpyruvate + H2O2 + NH4(+). It catalyses the reaction L-methionine + O2 + H2O = 4-methylsulfanyl-2-oxobutanoate + H2O2 + NH4(+). The catalysed reaction is L-arginine + O2 + H2O = 5-guanidino-2-oxopentanoate + H2O2 + NH4(+). Catalyzes an oxidative deamination of predominantly hydrophobic and aromatic L-amino acids, thus producing hydrogen peroxide that may contribute to the diverse toxic effects of this enzyme. Is active on L-Arg, L-Phe, L-Met, and L-Leu and is weakly active on L-Val. Exhibits diverse biological activities, such as hemorrhage, hemolysis, edema, apoptosis of vascular endothelial cells or tumor cell lines, antibacterial and antiparasitic activities, as well as regulation of platelet aggregation. Its effect on platelets is controversial, since it either induces aggregation or inhibits agonist-induced aggregation. These different effects are probably due to different experimental conditions. The chain is L-amino-acid oxidase from Crotalus adamanteus (Eastern diamondback rattlesnake).